The primary structure comprises 564 residues: MMNEDISIIDGHNSFLTEKSTVLLTQAKRTLEDEKEMITPPSSTVRKTMKEVNKRPSHPLSPDHSSPIAPSKAKRQRSDTCARSNGNLTLEEILQSLERRRINGELAKKPPYSYATLICLAILQSQEGKLTLSQIYHWIHVHFPYYKQKDASWQNSIRHNLSLNDAFIKTEKSCDGKGHFWEVRPGAETKFFKGENRGYEFVKDSLQDIGKYFEIDSTLDELEQVESGEGNDDLPDEEEREEAGKFPSIEIQLNSSPILRVSQLHHIPQLKTDNSVLNPHENLESMRNMIENDVNNIDSLEPPYVMKKYHTSLGLPSLVNAKDHFQAGVKNNNITQANRFNTLPITSAKSPQNFRKYFTSFNSNFEDLSPLRSNVGAGSLLDPLPYSPLKLYDQKNLALMSKPQSQQSYSNSQLPPPPSSHGSDLLKTPKMRHSDGLEKTPSRLISTPKDGNSILRKWQTPSHLFEDLYCSPLFRAIETPIRYITTPGGTLETQISPRKSSAPDVLTSATNSKFASSGLFGVDVYSVWKRATEKISDGNNTTDSNQKHHPYHNHPSNDSGNEKN.

The segment at 33-80 is disordered; that stretch reads DEKEMITPPSSTVRKTMKEVNKRPSHPLSPDHSSPIAPSKAKRQRSDT. The segment covering 58-67 has biased composition (low complexity); that stretch reads HPLSPDHSSP. A DNA-binding region (fork-head) is located at residues 108–199; sequence KKPPYSYATL…KFFKGENRGY (92 aa). Residues 224–241 are compositionally biased toward acidic residues; it reads QVESGEGNDDLPDEEERE. Positions 224 to 246 are disordered; that stretch reads QVESGEGNDDLPDEEEREEAGKF. The residue at position 342 (threonine 342) is a Phosphothreonine. The tract at residues 401–448 is disordered; the sequence is SKPQSQQSYSNSQLPPPPSSHGSDLLKTPKMRHSDGLEKTPSRLISTP. Over residues 402-413 the composition is skewed to polar residues; the sequence is KPQSQQSYSNSQ. A compositionally biased stretch (basic and acidic residues) spans 432 to 441; sequence RHSDGLEKTP. At serine 496 the chain carries Phosphoserine. The tract at residues 536–564 is disordered; it reads SDGNNTTDSNQKHHPYHNHPSNDSGNEKN. Residues 554–564 show a composition bias toward polar residues; it reads HPSNDSGNEKN.

Phosphorylated by CDK1.

It is found in the cytoplasm. It localises to the nucleus. Its function is as follows. Transcription factor regulating the cell cycle specific transcription of a spindle pole body (SPB) calmodulin binding protein SPC110. Required for full induction of SPC110 transcription in late G1. Binds to DNA consensus sequence 5'-[AT]AA[TC]AAACAA[AT]-3'. Dosage dependent suppressor of calmodulin mutants which have specific defects in SPB assembly. This Saccharomyces cerevisiae (strain ATCC 204508 / S288c) (Baker's yeast) protein is Forkhead transcription factor HCM1 (HCM1).